A 557-amino-acid polypeptide reads, in one-letter code: Potassium-transporting ATPase potassium-binding subunit (557 aa).

12 helical membrane passes run 5–25 (GFLLIATFLLVLMVLARPLGS), 63–83 (LCAILGLNMLGLAVLFFMLLG), 132–152 (GLTVQNFLSAASGIAVIFAFI), 170–190 (LLRITLWVLVPVALLIALFLI), 253–273 (FVQMLAIFLIPTALCFAFGEV), 283–303 (LLWAMSVIFVICVGVVMWAEV), 329–349 (VLVSSLFAVVTTAASCGAVIA), 356–376 (ALGGMVPMWLMQIGEVVFGGV), 379–399 (GLYGMMLFVLLAVFIAGLMIG), 416–436 (LTALAILVTPTLVLMGAALAM), 484–504 (LLAFCMFVGRFGVIIPVMAIA), and 526–546 (LFVGLLIGTVLLVGALTFIPA).

Belongs to the KdpA family. As to quaternary structure, the system is composed of three essential subunits: KdpA, KdpB and KdpC.

It localises to the cell inner membrane. Functionally, part of the high-affinity ATP-driven potassium transport (or Kdp) system, which catalyzes the hydrolysis of ATP coupled with the electrogenic transport of potassium into the cytoplasm. This subunit binds the periplasmic potassium ions and delivers the ions to the membrane domain of KdpB through an intramembrane tunnel. This chain is Potassium-transporting ATPase potassium-binding subunit, found in Shigella boydii serotype 18 (strain CDC 3083-94 / BS512).